The primary structure comprises 359 residues: 3-dehydroquinate synthase (359 aa).

NAD(+) is bound by residues 69-74 (DAETGK), 103-107 (GAATD), 127-128 (TT), Lys140, and Lys149. Zn(2+)-binding residues include Glu182, His244, and His260.

Belongs to the sugar phosphate cyclases superfamily. Dehydroquinate synthase family. Co(2+) serves as cofactor. It depends on Zn(2+) as a cofactor. The cofactor is NAD(+).

It localises to the cytoplasm. It catalyses the reaction 7-phospho-2-dehydro-3-deoxy-D-arabino-heptonate = 3-dehydroquinate + phosphate. Its pathway is metabolic intermediate biosynthesis; chorismate biosynthesis; chorismate from D-erythrose 4-phosphate and phosphoenolpyruvate: step 2/7. Functionally, catalyzes the conversion of 3-deoxy-D-arabino-heptulosonate 7-phosphate (DAHP) to dehydroquinate (DHQ). In Corynebacterium diphtheriae (strain ATCC 700971 / NCTC 13129 / Biotype gravis), this protein is 3-dehydroquinate synthase.